A 327-amino-acid chain; its full sequence is MEWRNHSGRVSEFVLLGFPAPAPLQVLLFALLLLAYVLVLTENTLIIMAIRNHSTLHKPMYFFLANMSFLEIWYVTVTIPKMLAGFVGSKQDHGQLISFEGCMTQLYFFLGLGCTECVLLAVMAYDRYMAICYPLHYPVIVSGRLCVQMAAGSWAGGFGISMVKVFLISGLSYCGPNIINHFFCDVSPLLNLSCTDMSTAELTDFILAIFILLGPLSVTGASYVAITGAVMHIPSAAGRYKAFSTCASHLTVVIIFYAASIFIYARPKALSAFDTNKLVSVLYAVIVPLLNPIIYCLRNQEVKRALCCTLHLYQHQDPDPKKASRNV.

Over 1–26 (MEWRNHSGRVSEFVLLGFPAPAPLQV) the chain is Extracellular. The N-linked (GlcNAc...) asparagine glycan is linked to N5. The chain crosses the membrane as a helical span at residues 27-47 (LLFALLLLAYVLVLTENTLII). At 48–55 (MAIRNHST) the chain is on the cytoplasmic side. Residues 56–76 (LHKPMYFFLANMSFLEIWYVT) traverse the membrane as a helical segment. At 77 to 104 (VTIPKMLAGFVGSKQDHGQLISFEGCMT) the chain is on the extracellular side. An intrachain disulfide couples C102 to C194. Residues 105 to 125 (QLYFFLGLGCTECVLLAVMAY) form a helical membrane-spanning segment. Topologically, residues 126–144 (DRYMAICYPLHYPVIVSGR) are cytoplasmic. A helical membrane pass occupies residues 145 to 165 (LCVQMAAGSWAGGFGISMVKV). At 166–201 (FLISGLSYCGPNIINHFFCDVSPLLNLSCTDMSTAE) the chain is on the extracellular side. N-linked (GlcNAc...) asparagine glycosylation is present at N191. Residues 202–222 (LTDFILAIFILLGPLSVTGAS) traverse the membrane as a helical segment. Over 223–242 (YVAITGAVMHIPSAAGRYKA) the chain is Cytoplasmic. A helical transmembrane segment spans residues 243–263 (FSTCASHLTVVIIFYAASIFI). Residues 264 to 276 (YARPKALSAFDTN) lie on the Extracellular side of the membrane. A helical membrane pass occupies residues 277–297 (KLVSVLYAVIVPLLNPIIYCL). Residues 298–327 (RNQEVKRALCCTLHLYQHQDPDPKKASRNV) lie on the Cytoplasmic side of the membrane.

This sequence belongs to the G-protein coupled receptor 1 family.

The protein resides in the cell membrane. Functionally, odorant receptor. The polypeptide is Olfactory receptor 6A2 (OR6A2) (Homo sapiens (Human)).